Reading from the N-terminus, the 373-residue chain is Dual-specificity RNA methyltransferase RlmN (373 aa).

Catalysis depends on glutamate 94, which acts as the Proton acceptor. A Radical SAM core domain is found at 100 to 339; it reads EDDRATLCVS…VIVRKTRGDD (240 aa). An intrachain disulfide couples cysteine 107 to cysteine 344. Residues cysteine 114, cysteine 118, and cysteine 121 each contribute to the [4Fe-4S] cluster site. S-adenosyl-L-methionine contacts are provided by residues 168–169, serine 200, 222–224, and asparagine 301; these read GE and SIH. The active-site S-methylcysteine intermediate is cysteine 344.

This sequence belongs to the radical SAM superfamily. RlmN family. It depends on [4Fe-4S] cluster as a cofactor.

The protein localises to the cytoplasm. It catalyses the reaction adenosine(2503) in 23S rRNA + 2 reduced [2Fe-2S]-[ferredoxin] + 2 S-adenosyl-L-methionine = 2-methyladenosine(2503) in 23S rRNA + 5'-deoxyadenosine + L-methionine + 2 oxidized [2Fe-2S]-[ferredoxin] + S-adenosyl-L-homocysteine. The catalysed reaction is adenosine(37) in tRNA + 2 reduced [2Fe-2S]-[ferredoxin] + 2 S-adenosyl-L-methionine = 2-methyladenosine(37) in tRNA + 5'-deoxyadenosine + L-methionine + 2 oxidized [2Fe-2S]-[ferredoxin] + S-adenosyl-L-homocysteine. Its function is as follows. Specifically methylates position 2 of adenine 2503 in 23S rRNA and position 2 of adenine 37 in tRNAs. m2A2503 modification seems to play a crucial role in the proofreading step occurring at the peptidyl transferase center and thus would serve to optimize ribosomal fidelity. This Shewanella pealeana (strain ATCC 700345 / ANG-SQ1) protein is Dual-specificity RNA methyltransferase RlmN.